Consider the following 129-residue polypeptide: Small ribosomal subunit protein uS9 (129 aa).

The protein belongs to the universal ribosomal protein uS9 family.

This is Small ribosomal subunit protein uS9 from Helicobacter acinonychis (strain Sheeba).